A 454-amino-acid polypeptide reads, in one-letter code: F-box protein At1g67130 (454 aa).

The F-box domain maps to 4–53 (GETLDSIPTDLILDILSRLPTKSIARFHCVSKLWSSMLASQDFTRLFVNR).

In Arabidopsis thaliana (Mouse-ear cress), this protein is F-box protein At1g67130.